The following is a 121-amino-acid chain: Large ribosomal subunit protein bL20 (121 aa).

This sequence belongs to the bacterial ribosomal protein bL20 family.

In terms of biological role, binds directly to 23S ribosomal RNA and is necessary for the in vitro assembly process of the 50S ribosomal subunit. It is not involved in the protein synthesizing functions of that subunit. This chain is Large ribosomal subunit protein bL20, found in Sphingopyxis alaskensis (strain DSM 13593 / LMG 18877 / RB2256) (Sphingomonas alaskensis).